The sequence spans 387 residues: 3-ketoacyl-CoA thiolase (387 aa).

The active-site Acyl-thioester intermediate is the cysteine 91. Residues histidine 343 and cysteine 373 each act as proton acceptor in the active site.

The protein belongs to the thiolase-like superfamily. Thiolase family. In terms of assembly, heterotetramer of two alpha chains (FadB) and two beta chains (FadA).

It is found in the cytoplasm. It carries out the reaction an acyl-CoA + acetyl-CoA = a 3-oxoacyl-CoA + CoA. Its pathway is lipid metabolism; fatty acid beta-oxidation. Functionally, catalyzes the final step of fatty acid oxidation in which acetyl-CoA is released and the CoA ester of a fatty acid two carbons shorter is formed. The sequence is that of 3-ketoacyl-CoA thiolase from Shigella dysenteriae serotype 1 (strain Sd197).